The following is a 259-amino-acid chain: Thiazole synthase (259 aa).

The active-site Schiff-base intermediate with DXP is Lys-95. 1-deoxy-D-xylulose 5-phosphate is bound by residues Gly-156, 182-183 (AG), and 204-205 (NT).

It belongs to the ThiG family. In terms of assembly, homotetramer. Forms heterodimers with either ThiH or ThiS.

It is found in the cytoplasm. It catalyses the reaction [ThiS sulfur-carrier protein]-C-terminal-Gly-aminoethanethioate + 2-iminoacetate + 1-deoxy-D-xylulose 5-phosphate = [ThiS sulfur-carrier protein]-C-terminal Gly-Gly + 2-[(2R,5Z)-2-carboxy-4-methylthiazol-5(2H)-ylidene]ethyl phosphate + 2 H2O + H(+). The protein operates within cofactor biosynthesis; thiamine diphosphate biosynthesis. Catalyzes the rearrangement of 1-deoxy-D-xylulose 5-phosphate (DXP) to produce the thiazole phosphate moiety of thiamine. Sulfur is provided by the thiocarboxylate moiety of the carrier protein ThiS. In vitro, sulfur can be provided by H(2)S. This Baumannia cicadellinicola subsp. Homalodisca coagulata protein is Thiazole synthase.